Reading from the N-terminus, the 149-residue chain is Large ribosomal subunit protein bL9 (149 aa).

It belongs to the bacterial ribosomal protein bL9 family.

Its function is as follows. Binds to the 23S rRNA. The protein is Large ribosomal subunit protein bL9 of Haemophilus influenzae (strain PittEE).